Consider the following 33-residue polypeptide: Brevinin-2Rh (33 aa).

Cysteine 27 and cysteine 33 are joined by a disulfide.

Expressed by the skin glands.

It localises to the secreted. Antimicrobial peptide. This is Brevinin-2Rh from Pelophylax ridibundus (Marsh frog).